The sequence spans 460 residues: Ammonium transporter Rh type B (460 aa).

Topologically, residues 1–10 (MTGYSTNMRI) are cytoplasmic. Residues 11–31 (KLPVFCLLLEFITIILFAVFV) form a helical membrane-spanning segment. Over 32–62 (RYDHESDAKQWHDEMRNHSVQNAENDFYFRY) the chain is Extracellular. N48 is a glycosylation site (N-linked (GlcNAc...) asparagine). A helical transmembrane segment spans residues 63–83 (PSFQDVHVMIFIGFGFLMTFL). The Cytoplasmic portion of the chain corresponds to 84–87 (KRYG). The chain crosses the membrane as a helical span at residues 88-108 (FSSVAFNFLIAAFGLQWSTLI). Residues 109-125 (QGFFHGFHDGKIHVGIE) are Extracellular-facing. A helical transmembrane segment spans residues 126–146 (SMINADFCTGAVLISFGAVLG). The Cytoplasmic portion of the chain corresponds to 147 to 150 (KTSP). A helical membrane pass occupies residues 151 to 171 (VQLIVMTLIEVTLFGINEYII). The Extracellular segment spans residues 172–179 (LNIVGAKD). The chain crosses the membrane as a helical span at residues 180-202 (AGGSMTIHTFGAYFGLIVSRVLY). Over 203–220 (RDDLEKSRQREGSVYHSD) the chain is Cytoplasmic. A helical transmembrane segment spans residues 221–241 (LFAMIGTIYLWMFWPSFNSAI). The Extracellular segment spans residues 242–252 (TAHGDDQHRTV). A helical transmembrane segment spans residues 253-273 (MNTYYSLAACTLATFGFSALL). The Cytoplasmic portion of the chain corresponds to 274 to 283 (NGEGKLDMVH). A helical membrane pass occupies residues 284–304 (IQNAALAGGVAVGTSGEMMLT). P305 is a topological domain (extracellular). Residues 306–326 (FGAMIAGTLAGMISVLGYKYL) form a helical membrane-spanning segment. The Cytoplasmic segment spans residues 327–347 (TPVLDSKLKIQDTCGVHNLHG). Residues 348 to 368 (MPGILGALIGAIVALFATAEI) traverse the membrane as a helical segment. The Extracellular portion of the chain corresponds to 369-394 (YGAGMEDVFPLISDGSRTAKQQSLYQ). Residues 395-415 (FLALLVALGFAILGGLVVGFI) form a helical membrane-spanning segment. Over 416–460 (LKLPIFGTPSDAECFEDAVYWEVPGGEGHQQLTVVINNEDPDTQA) the chain is Cytoplasmic.

The protein belongs to the ammonium transporter (TC 2.A.49) family. Rh subfamily.

The protein resides in the basolateral cell membrane. It localises to the cytoplasmic vesicle membrane. Functions as a specific ammonium transporter. This Xenopus tropicalis (Western clawed frog) protein is Ammonium transporter Rh type B (rhbg).